Consider the following 341-residue polypeptide: Paired box protein Pax-9 (341 aa).

Residues alanine 4–lysine 130 constitute a DNA-binding region (paired). The PAI subdomain stretch occupies residues glutamate 7–threonine 63. Residues threonine 82 to lysine 130 are RED subdomain. The segment at alanine 168–proline 189 is interaction with KDM5B.

As to quaternary structure, interacts with KDM5B.

The protein resides in the nucleus. In terms of biological role, transcription factor required for normal development of thymus, parathyroid glands, ultimobranchial bodies, teeth, skeletal elements of skull and larynx as well as distal limbs. The sequence is that of Paired box protein Pax-9 (PAX9) from Pan troglodytes (Chimpanzee).